A 244-amino-acid chain; its full sequence is Thiol S-methyltransferase TMT1A (244 aa).

Residues 1-28 (MELTIFILRLAIYILTFPLYLLNFLGLW) form a targeting to lipid droplets region. The N-terminal stretch at 1-29 (MELTIFILRLAIYILTFPLYLLNFLGLWS) is a signal peptide.

Belongs to the methyltransferase superfamily. In terms of assembly, (Microbial infection) Interacts with HCV non-structural protein 4B/NS4B (via C-terminal region); this interaction may promote the recruitment of NS4B in the proximity of lipid droplet. Self-associates. Interacts with SNRNP200; this interaction may promote the odontogenic differentiation. Post-translationally, methylated at lysine residues most likely by EZH2. In terms of tissue distribution, expressed in the liver.

The protein resides in the lipid droplet. It localises to the endoplasmic reticulum. Its subcellular location is the membrane. The protein localises to the microsome. It is found in the cytoplasm. The protein resides in the cytosol. It catalyses the reaction a thiol + S-adenosyl-L-methionine = a methyl thioether + S-adenosyl-L-homocysteine + H(+). The catalysed reaction is an adenosine in mRNA + S-adenosyl-L-methionine = an N(6)-methyladenosine in mRNA + S-adenosyl-L-homocysteine + H(+). Its activity is regulated as follows. Inhibited by 2,3-dichloro-alpha-methylbenzylamine (DCMB). In terms of biological role, thiol S-methyltransferase that catalyzes the transfer of a methyl group from S-adenosyl-L-methionine to alkyl and phenolic thiol-containing acceptor substrates. Together with TMT1B accounts for most of S-thiol methylation activity in the endoplasmic reticulum of hepatocytes. Able to methylate the N6 position of adenosine residues in long non-coding RNAs (lncRNAs). May facilitate lncRNAs transfer into exosomes at the tumor-stroma interface. Promotes osteogenic and odontogenic differentiation by regulating the expression of genes involved in stem cell differentiation and survival. Targeted from the endoplasmic reticulum to lipid droplets, where it recruits cellular proteins to form functional organelles. Functionally, (Microbial infection) May be involved in the assembly and release stages of hepatitis C virus (HCV) life cycle and thus play a crucial role in HCV propagation. In Homo sapiens (Human), this protein is Thiol S-methyltransferase TMT1A.